Here is a 456-residue protein sequence, read N- to C-terminus: Argininosuccinate lyase (456 aa).

This sequence belongs to the lyase 1 family. Argininosuccinate lyase subfamily.

The protein localises to the cytoplasm. The enzyme catalyses 2-(N(omega)-L-arginino)succinate = fumarate + L-arginine. It functions in the pathway amino-acid biosynthesis; L-arginine biosynthesis; L-arginine from L-ornithine and carbamoyl phosphate: step 3/3. The polypeptide is Argininosuccinate lyase (Carboxydothermus hydrogenoformans (strain ATCC BAA-161 / DSM 6008 / Z-2901)).